The chain runs to 218 residues: N-(5'-phosphoribosyl)anthranilate isomerase (218 aa).

This sequence belongs to the TrpF family.

The catalysed reaction is N-(5-phospho-beta-D-ribosyl)anthranilate = 1-(2-carboxyphenylamino)-1-deoxy-D-ribulose 5-phosphate. The protein operates within amino-acid biosynthesis; L-tryptophan biosynthesis; L-tryptophan from chorismate: step 3/5. This chain is N-(5'-phosphoribosyl)anthranilate isomerase, found in Stenotrophomonas maltophilia (strain R551-3).